The sequence spans 2144 residues: Alpha-protein kinase 2 (2144 aa).

Residues 7–105 enclose the Ig-like 1 domain; the sequence is PERRTLCFLS…ICCSASLEVQ (99 aa). Cysteines 33 and 98 form a disulfide. Disordered regions lie at residues 425–473, 500–575, 727–775, 845–864, 881–907, 1011–1065, 1316–1340, 1471–1509, 1565–1587, 1629–1696, and 1720–1754; these read ETAK…LQTM, SLAR…GAPG, EDNE…NVGS, QTQG…DGKS, EASE…TLPY, SCEA…PEGQ, DPVE…EMEM, GPGE…ETEV, CGNH…PKGN, ECES…GSGH, and ENSR…PCKA. Residues 500–511 are compositionally biased toward basic and acidic residues; it reads SLARERTDEKYP. The segment covering 853 to 864 has biased composition (basic and acidic residues); sequence RSTDKRSQDGKS. Over residues 897-906 the composition is skewed to polar residues; the sequence is PPSTFSSTLP. The segment covering 1574–1587 has biased composition (polar residues); that stretch reads DLTNTPCTSSPKGN. Composition is skewed to basic and acidic residues over residues 1631–1645 and 1732–1754; these read ESEK…RDPC and PKFE…PCKA. In terms of domain architecture, Ig-like 2 spans 1759–1847; sequence PVLLKRIQAE…GKVTAEFNLT (89 aa). A disulfide bridge connects residues Cys1781 and Cys1831. In terms of domain architecture, Alpha-type protein kinase spans 1874 to 2106; sequence KEDVFNDSYF…YCKMLGLKSL (233 aa). The segment at 2109–2144 is disordered; it reads NSQKPKKPIVGKGRVPTNATQVKTPESETPPAERKT.

The protein belongs to the protein kinase superfamily. Alpha-type protein kinase family. ALPK subfamily.

The protein localises to the basolateral cell membrane. The catalysed reaction is L-seryl-[protein] + ATP = O-phospho-L-seryl-[protein] + ADP + H(+). The enzyme catalyses L-threonyl-[protein] + ATP = O-phospho-L-threonyl-[protein] + ADP + H(+). Its function is as follows. Protein kinase that recognizes phosphorylation sites in which the surrounding peptides have an alpha-helical conformation. Regulates cardiac development and cardiomyocyte differentiation by negatively regulating Wnt/beta-catenin signaling. This chain is Alpha-protein kinase 2, found in Mus musculus (Mouse).